Here is a 159-residue protein sequence, read N- to C-terminus: Cyclic pyranopterin monophosphate synthase (159 aa).

Residues 75 to 77 (LCH) and 113 to 114 (ME) contribute to the substrate site. The active site involves Asp-128.

The protein belongs to the MoaC family. In terms of assembly, homohexamer; trimer of dimers.

It catalyses the reaction (8S)-3',8-cyclo-7,8-dihydroguanosine 5'-triphosphate = cyclic pyranopterin phosphate + diphosphate. It functions in the pathway cofactor biosynthesis; molybdopterin biosynthesis. Catalyzes the conversion of (8S)-3',8-cyclo-7,8-dihydroguanosine 5'-triphosphate to cyclic pyranopterin monophosphate (cPMP). This Cereibacter sphaeroides (strain ATCC 17023 / DSM 158 / JCM 6121 / CCUG 31486 / LMG 2827 / NBRC 12203 / NCIMB 8253 / ATH 2.4.1.) (Rhodobacter sphaeroides) protein is Cyclic pyranopterin monophosphate synthase.